The sequence spans 274 residues: 3-methyl-2-oxobutanoate hydroxymethyltransferase (274 aa).

The Mg(2+) site is built by Asp46 and Asp85. Residues 46–47, Asp85, and Lys115 contribute to the 3-methyl-2-oxobutanoate site; that span reads DS. Glu117 is a Mg(2+) binding site. Catalysis depends on Glu184, which acts as the Proton acceptor.

The protein belongs to the PanB family. In terms of assembly, homodecamer; pentamer of dimers. Mg(2+) is required as a cofactor.

The protein resides in the cytoplasm. It catalyses the reaction 3-methyl-2-oxobutanoate + (6R)-5,10-methylene-5,6,7,8-tetrahydrofolate + H2O = 2-dehydropantoate + (6S)-5,6,7,8-tetrahydrofolate. It participates in cofactor biosynthesis; (R)-pantothenate biosynthesis; (R)-pantoate from 3-methyl-2-oxobutanoate: step 1/2. In terms of biological role, catalyzes the reversible reaction in which hydroxymethyl group from 5,10-methylenetetrahydrofolate is transferred onto alpha-ketoisovalerate to form ketopantoate. In Thermoanaerobacter pseudethanolicus (strain ATCC 33223 / 39E) (Clostridium thermohydrosulfuricum), this protein is 3-methyl-2-oxobutanoate hydroxymethyltransferase.